A 183-amino-acid chain; its full sequence is MMAFPPQSCVHVLPPKSIQMWEPNHNTMHGSSQSPRNYRVHDSQQMVWVLTGNTLTAVPASNNVKPVILSLIACRDTEFQDVKKGNLVFLGIKNRNLCFCCVEMEGKPTLQLKEVDIMNLYKERKAQKAFLFYHGIEGSTSVFQSVLYPGWFIATSSIERQTIILTHQRGKLVNTNFYIESEK.

A propeptide spanning residues 1–30 (MMAFPPQSCVHVLPPKSIQMWEPNHNTMHG) is cleaved from the precursor.

Belongs to the IL-1 family. In terms of assembly, interacts with cargo receptor TMED10; the interaction mediates the translocation from the cytoplasm into the ERGIC (endoplasmic reticulum-Golgi intermediate compartment) and thereby secretion. Post-translationally, N-terminal truncation leads to a dramatic enhancement of its activity (&gt;1000-fold).

It is found in the cytoplasm. Its subcellular location is the secreted. Cytokine that binds to and signals through the IL1RL2/IL-36R receptor which in turn activates NF-kappa-B and MAPK signaling pathways in target cells linked to a pro-inflammatory response. Part of the IL-36 signaling system that is thought to be present in epithelial barriers and to take part in local inflammatory response; similar to the IL-1 system with which it shares the coreceptor IL1RAP. Stimulates production of interleukin-6 and interleukin-8 in synovial fibrobasts, articular chondrocytes and mature adipocytes. Induces expression of a number of antimicrobial peptides including beta-defensin 4 and beta-defensin 103 as well as a number of matrix metalloproteases. Seems to be involved in skin inflammatory response by acting on keratinocytes, dendritic cells and indirectly on T-cells to drive tissue infiltration, cell maturation and cell proliferation. Induces the production of pro-inflammatory cytokines in bone marrow-derived dendritic cells (BMDCs), including IL-12, Il-1 beta, IL-6, TNF-alpha and IL-23, and activates p38 MAPK phosphorylation in BMDCs. Involved in dendritic cell maturation by stimulating the surface expression of CD80, CD86 and MHC class II. Induces the production of IFN-gamma, IL-4 and IL-17 by T-helper 1 (Th1) cells, cultured CD4(+) T-cells and splenocytes. In Mus musculus (Mouse), this protein is Interleukin-36 beta.